The sequence spans 312 residues: Plasma membrane-associated coenzyme Q6 reductase PGA3 (312 aa).

At M1–P15 the chain is on the extracellular side. A helical transmembrane segment spans residues V16–M36. Over S37–E39 the chain is Cytoplasmic. The chain crosses the membrane as a helical span at residues L40–A60. Residues Y61–H179 lie on the Extracellular side of the membrane. The region spanning D70–E173 is the FAD-binding FR-type domain. FAD-binding positions include A153–G168 and H179–L211. A helical transmembrane segment spans residues L180 to I200. Residues T201 to F312 lie on the Cytoplasmic side of the membrane.

Belongs to the flavoprotein pyridine nucleotide cytochrome reductase family. The cofactor is FAD.

The protein localises to the cell membrane. It localises to the endoplasmic reticulum membrane. The catalysed reaction is 2 Fe(III)-[cytochrome b5] + NADH = 2 Fe(II)-[cytochrome b5] + NAD(+) + H(+). Its activity is regulated as follows. Inhibited by diphenylene iodonium (DPI). In terms of biological role, NADH-dependent cytochrome b5 reductase that reduces coenzyme Q6 at the plasma membrane and mediates lifespan extension by calorie restriction by shifting fermentative to respiratory metabolism, probably through modulating the NAD(+)/NADH ratio. This chain is Plasma membrane-associated coenzyme Q6 reductase PGA3 (PGA3), found in Saccharomyces cerevisiae (strain ATCC 204508 / S288c) (Baker's yeast).